The sequence spans 253 residues: Imidazole glycerol phosphate synthase subunit HisF (253 aa).

Active-site residues include D11 and D130.

This sequence belongs to the HisA/HisF family. Heterodimer of HisH and HisF.

It localises to the cytoplasm. It catalyses the reaction 5-[(5-phospho-1-deoxy-D-ribulos-1-ylimino)methylamino]-1-(5-phospho-beta-D-ribosyl)imidazole-4-carboxamide + L-glutamine = D-erythro-1-(imidazol-4-yl)glycerol 3-phosphate + 5-amino-1-(5-phospho-beta-D-ribosyl)imidazole-4-carboxamide + L-glutamate + H(+). The protein operates within amino-acid biosynthesis; L-histidine biosynthesis; L-histidine from 5-phospho-alpha-D-ribose 1-diphosphate: step 5/9. Functionally, IGPS catalyzes the conversion of PRFAR and glutamine to IGP, AICAR and glutamate. The HisF subunit catalyzes the cyclization activity that produces IGP and AICAR from PRFAR using the ammonia provided by the HisH subunit. The chain is Imidazole glycerol phosphate synthase subunit HisF from Acidithiobacillus ferrooxidans (strain ATCC 23270 / DSM 14882 / CIP 104768 / NCIMB 8455) (Ferrobacillus ferrooxidans (strain ATCC 23270)).